Reading from the N-terminus, the 142-residue chain is Large ribosomal subunit protein uL13 (142 aa).

Belongs to the universal ribosomal protein uL13 family. In terms of assembly, part of the 50S ribosomal subunit.

In terms of biological role, this protein is one of the early assembly proteins of the 50S ribosomal subunit, although it is not seen to bind rRNA by itself. It is important during the early stages of 50S assembly. The protein is Large ribosomal subunit protein uL13 of Wigglesworthia glossinidia brevipalpis.